Reading from the N-terminus, the 410-residue chain is uncharacterized protein (410 aa).

The next 11 membrane-spanning stretches (helical) occupy residues Ile-14–Ile-34, Gly-48–Ile-68, Ile-82–Phe-102, Tyr-140–Ser-160, Thr-164–Phe-184, Tyr-212–Ser-232, Leu-251–Val-271, Pro-279–Val-299, Val-303–Met-323, Gly-342–Ile-362, and Ile-371–Ala-391.

Belongs to the major facilitator superfamily. TCR/Tet family.

The protein localises to the cell membrane. This is an uncharacterized protein from Bacillus subtilis (strain 168).